The following is a 426-amino-acid chain: Tyrosine--tRNA ligase (426 aa).

Tyr35 contacts L-tyrosine. The short motif at 40-49 (PTADSLHIGH) is the 'HIGH' region element. Positions 172 and 176 each coordinate L-tyrosine. The short motif at 232 to 236 (KLGKS) is the 'KMSKS' region element. Residue Lys235 coordinates ATP. Positions 357–414 (ENIKDILVNSKLSKSKNNAKSVILSSSIRINNKKQKSIDFMFKKEDKLFNLFTLIKKG) constitute an S4 RNA-binding domain.

The protein belongs to the class-I aminoacyl-tRNA synthetase family. TyrS type 1 subfamily. Homodimer.

It localises to the cytoplasm. It catalyses the reaction tRNA(Tyr) + L-tyrosine + ATP = L-tyrosyl-tRNA(Tyr) + AMP + diphosphate + H(+). Functionally, catalyzes the attachment of tyrosine to tRNA(Tyr) in a two-step reaction: tyrosine is first activated by ATP to form Tyr-AMP and then transferred to the acceptor end of tRNA(Tyr). The protein is Tyrosine--tRNA ligase of Wigglesworthia glossinidia brevipalpis.